We begin with the raw amino-acid sequence, 35 residues long: uncharacterized protein (35 aa).

The N-terminal stretch at 1–25 is a signal peptide; sequence MTERKLLQLLRRPFISLSLFTALRA.

This is an uncharacterized protein from Saccharomyces cerevisiae (strain ATCC 204508 / S288c) (Baker's yeast).